The chain runs to 593 residues: Arylsulfatase D (593 aa).

Residues 1-33 (MRSAARRGRAAPAARDSLPVLLFLCLLLKTCEP) form the signal peptide. Positions 49 and 50 each coordinate Ca(2+). N-linked (GlcNAc...) asparagine glycosylation is present at asparagine 61. Cysteine 89 is a Ca(2+) binding site. Residue cysteine 89 is the Nucleophile of the active site. Cysteine 89 is subject to 3-oxoalanine (Cys). The N-linked (GlcNAc...) asparagine glycan is linked to asparagine 128. Lysine 148 provides a ligand contact to substrate. The active site involves histidine 150. Substrate is bound at residue histidine 304. The N-linked (GlcNAc...) asparagine glycan is linked to asparagine 347. Ca(2+)-binding residues include aspartate 356 and histidine 357. Lysine 381 lines the substrate pocket.

The protein belongs to the sulfatase family. The cofactor is Ca(2+). In terms of processing, the conversion to 3-oxoalanine (also known as C-formylglycine, FGly), of a serine or cysteine residue in prokaryotes and of a cysteine residue in eukaryotes, is critical for catalytic activity. As to expression, expressed in the pancreas, kidney, liver, lung, placenta, brain and heart.

The protein resides in the lysosome. This Homo sapiens (Human) protein is Arylsulfatase D (ARSD).